A 231-amino-acid chain; its full sequence is Small ribosomal subunit protein uS3 (231 aa).

Residues 39–107 (IRKFLKAKLY…DVTINIKEER (69 aa)) form the KH type-2 domain.

It belongs to the universal ribosomal protein uS3 family. As to quaternary structure, part of the 30S ribosomal subunit. Forms a tight complex with proteins S10 and S14.

Functionally, binds the lower part of the 30S subunit head. Binds mRNA in the 70S ribosome, positioning it for translation. This is Small ribosomal subunit protein uS3 from Campylobacter hominis (strain ATCC BAA-381 / DSM 21671 / CCUG 45161 / LMG 19568 / NCTC 13146 / CH001A).